Reading from the N-terminus, the 401-residue chain is Probable tRNA sulfurtransferase (401 aa).

Positions 60–165 constitute a THUMP domain; that stretch reads EPIIDKLKNV…QEGTYITCHD (106 aa). ATP is bound by residues 183 to 184, 208 to 209, R265, G287, and Q296; these read ML and HF.

This sequence belongs to the ThiI family.

It localises to the cytoplasm. It carries out the reaction [ThiI sulfur-carrier protein]-S-sulfanyl-L-cysteine + a uridine in tRNA + 2 reduced [2Fe-2S]-[ferredoxin] + ATP + H(+) = [ThiI sulfur-carrier protein]-L-cysteine + a 4-thiouridine in tRNA + 2 oxidized [2Fe-2S]-[ferredoxin] + AMP + diphosphate. The catalysed reaction is [ThiS sulfur-carrier protein]-C-terminal Gly-Gly-AMP + S-sulfanyl-L-cysteinyl-[cysteine desulfurase] + AH2 = [ThiS sulfur-carrier protein]-C-terminal-Gly-aminoethanethioate + L-cysteinyl-[cysteine desulfurase] + A + AMP + 2 H(+). The protein operates within cofactor biosynthesis; thiamine diphosphate biosynthesis. In terms of biological role, catalyzes the ATP-dependent transfer of a sulfur to tRNA to produce 4-thiouridine in position 8 of tRNAs, which functions as a near-UV photosensor. Also catalyzes the transfer of sulfur to the sulfur carrier protein ThiS, forming ThiS-thiocarboxylate. This is a step in the synthesis of thiazole, in the thiamine biosynthesis pathway. The sulfur is donated as persulfide by IscS. This is Probable tRNA sulfurtransferase from Geobacillus sp. (strain WCH70).